The sequence spans 303 residues: Glutaminase (303 aa).

Substrate contacts are provided by S61, N111, E155, N162, Y186, Y238, and V256.

The protein belongs to the glutaminase family. In terms of assembly, homotetramer.

The enzyme catalyses L-glutamine + H2O = L-glutamate + NH4(+). In Marinomonas sp. (strain MWYL1), this protein is Glutaminase.